An 877-amino-acid polypeptide reads, in one-letter code: Protein SEY1 homolog (877 aa).

The Cytoplasmic segment spans residues 1 to 735 (MVAFAGGART…LRSIEGEKQN (735 aa)). The GB1/RHD3-type G domain occupies 49-307 (GITYHVVGVL…VPLDGIPSYL (259 aa)). 59–66 (GGQSSGKS) is a GTP binding site. Residues 388–410 (RIDIVRKTEAELEEELLKVELKL) adopt a coiled-coil conformation. Residues 736–756 (LPAWVLPVLLLLGWNEIWYVL) traverse the membrane as a helical segment. Residues 757–759 (SSP) are Lumenal-facing. Residues 760–780 (VLLVVVVIIAAVFLRGFLLTQ) traverse the membrane as a helical segment. Topologically, residues 781–877 (WAIFEETGPT…KEEEVPTQKE (97 aa)) are cytoplasmic. Residues 850–877 (PTVLPPSTTSATLTRRLKKEEEVPTQKE) are disordered. Basic and acidic residues predominate over residues 867-877 (KKEEEVPTQKE).

The protein belongs to the TRAFAC class dynamin-like GTPase superfamily. GB1/RHD3 GTPase family. RHD3 subfamily.

Its subcellular location is the endoplasmic reticulum membrane. Probable GTP-binding protein that may be involved in cell development. The polypeptide is Protein SEY1 homolog (Trypanosoma cruzi (strain CL Brener)).